The sequence spans 180 residues: Small ribosomal subunit protein uS5 (180 aa).

The S5 DRBM domain maps to 24 to 87 (MIEKLVAVNR…EQARKNLATV (64 aa)).

This sequence belongs to the universal ribosomal protein uS5 family. Part of the 30S ribosomal subunit. Contacts proteins S4 and S8.

Its function is as follows. With S4 and S12 plays an important role in translational accuracy. Located at the back of the 30S subunit body where it stabilizes the conformation of the head with respect to the body. The protein is Small ribosomal subunit protein uS5 of Xanthomonas axonopodis pv. citri (strain 306).